Here is an 82-residue protein sequence, read N- to C-terminus: Probable [Fe-S]-dependent transcriptional repressor (82 aa).

Iron-sulfur cluster is bound by residues cysteine 56, cysteine 61, cysteine 64, and cysteine 71.

Belongs to the FeoC family.

In terms of biological role, may function as a transcriptional regulator that controls feoABC expression. In Yersinia enterocolitica serotype O:8 / biotype 1B (strain NCTC 13174 / 8081), this protein is Probable [Fe-S]-dependent transcriptional repressor.